A 106-amino-acid polypeptide reads, in one-letter code: Nucleoid-associated protein Fjoh_2555 (106 aa).

The protein belongs to the YbaB/EbfC family. In terms of assembly, homodimer.

It localises to the cytoplasm. Its subcellular location is the nucleoid. Its function is as follows. Binds to DNA and alters its conformation. May be involved in regulation of gene expression, nucleoid organization and DNA protection. This is Nucleoid-associated protein Fjoh_2555 from Flavobacterium johnsoniae (strain ATCC 17061 / DSM 2064 / JCM 8514 / BCRC 14874 / CCUG 350202 / NBRC 14942 / NCIMB 11054 / UW101) (Cytophaga johnsonae).